Here is a 719-residue protein sequence, read N- to C-terminus: Anaphase-promoting complex subunit 4 (719 aa).

Residues 57 to 96 form a WD repeat; sequence NSQRIWDVDFHDLEATELCWNHDGNLIVVGFKNGELKIID.

In terms of assembly, the APC/C is composed of at least 13 subunits: apc1, apc2, nuc2, apc4, apc5, cut9, apc8, apc10, apc11, hcn1, apc13, apc14 and apc15. Interacts with apc1 and dim1.

Functionally, component of the anaphase-promoting complex/cyclosome (APC/C), a cell cycle-regulated E3 ubiquitin-protein ligase complex that controls progression through mitosis and the G1 phase of the cell cycle. The APC/C is thought to confer substrate specificity and, in the presence of ubiquitin-conjugating E2 enzymes, it catalyzes the formation of protein-ubiquitin conjugates that are subsequently degraded by the 26S proteasome. Has a role in promoting metaphase to anaphase transition via the ubiquitination of specific mitotic substrates. The protein is Anaphase-promoting complex subunit 4 (cut20) of Schizosaccharomyces pombe (strain 972 / ATCC 24843) (Fission yeast).